The primary structure comprises 476 residues: ATP sulfurylase 2 (476 aa).

The transit peptide at M1–S56 directs the protein to the chloroplast.

Belongs to the sulfate adenylyltransferase family. As to quaternary structure, homotetramer. In terms of tissue distribution, mostly expressed in leaves or cotyledons.

It is found in the plastid. Its subcellular location is the chloroplast. It localises to the cytoplasm. The enzyme catalyses sulfate + ATP + H(+) = adenosine 5'-phosphosulfate + diphosphate. It functions in the pathway sulfur metabolism; hydrogen sulfide biosynthesis; sulfite from sulfate: step 1/3. This chain is ATP sulfurylase 2 (APS2), found in Arabidopsis thaliana (Mouse-ear cress).